We begin with the raw amino-acid sequence, 296 residues long: 33 kDa chaperonin (296 aa).

2 disulfides stabilise this stretch: Cys-238-Cys-240 and Cys-271-Cys-274.

Belongs to the HSP33 family. Under oxidizing conditions two disulfide bonds are formed involving the reactive cysteines. Under reducing conditions zinc is bound to the reactive cysteines and the protein is inactive.

It is found in the cytoplasm. Functionally, redox regulated molecular chaperone. Protects both thermally unfolding and oxidatively damaged proteins from irreversible aggregation. Plays an important role in the bacterial defense system toward oxidative stress. This Clostridium botulinum (strain Loch Maree / Type A3) protein is 33 kDa chaperonin.